A 202-amino-acid polypeptide reads, in one-letter code: T-cell surface glycoprotein CD3 epsilon chain (202 aa).

The signal sequence occupies residues 1-21; the sequence is MPSGSLWRVLGLCLLSVGAWG. Topologically, residues 22–125 are extracellular; that stretch reads QEDNEDPLEP…NCVEVDTMTA (104 aa). The 75-residue stretch at 33 to 107 folds into the Ig-like domain; the sequence is PQTSASARYK…TSNSLEKNYL (75 aa). A disulfide bond links C54 and C96. A helical membrane pass occupies residues 126-146; the sequence is VAIVVADVCITLGFLLLVYYW. Residues 147 to 202 are Cytoplasmic-facing; the sequence is SKNKKASSVTMMRGPGAGGRPRGQNKEKPPPVPNPDYEPIRKGQQDLYSGLNQRGI. The tract at residues 156–202 is disordered; sequence TMMRGPGAGGRPRGQNKEKPPPVPNPDYEPIRKGQQDLYSGLNQRGI. The tract at residues 170 to 187 is NUMB-binding region; that stretch reads QNKEKPPPVPNPDYEPIR. In terms of domain architecture, ITAM spans 173-200; it reads EKPPPVPNPDYEPIRKGQQDLYSGLNQR. Positions 174-181 are proline-rich sequence; it reads KPPPVPNP. Phosphotyrosine is present on residues Y183 and Y194. Positions 192 to 202 are enriched in polar residues; the sequence is DLYSGLNQRGI.

The TCR-CD3 complex is composed of a CD3D/CD3E and a CD3G/CD3E heterodimers that preferentially associate with TCRalpha and TCRbeta, respectively, to form TCRalpha/CD3E/CD3G and TCRbeta/CD3G/CD3E trimers. In turn, the hexamer interacts with CD3Z homodimer to form the TCR-CD3 complex. Alternatively, TCRalpha and TCRbeta can be replaced by TCRgamma and TCRdelta. Interacts with CD6. Interacts (via Proline-rich sequence) with NCK1; the interaction is ligand dependent but independent of tyrosine kinase activation. Phosphorylated on Tyr residues after T-cell receptor triggering by LCK in association with CD4/CD8.

It is found in the cell membrane. Part of the TCR-CD3 complex present on T-lymphocyte cell surface that plays an essential role in adaptive immune response. When antigen presenting cells (APCs) activate T-cell receptor (TCR), TCR-mediated signals are transmitted across the cell membrane by the CD3 chains CD3D, CD3E, CD3G and CD3Z. All CD3 chains contain immunoreceptor tyrosine-based activation motifs (ITAMs) in their cytoplasmic domain. Upon TCR engagement, these motifs become phosphorylated by Src family protein tyrosine kinases LCK and FYN, resulting in the activation of downstream signaling pathways. In addition of this role of signal transduction in T-cell activation, CD3E plays an essential role in correct T-cell development. Also participates in internalization and cell surface down-regulation of TCR-CD3 complexes via endocytosis sequences present in CD3E cytosolic region. In addition to its role as a TCR coreceptor, it serves as a receptor for ITPRIPL1. Ligand recognition inhibits T-cell activation by promoting interaction with NCK1, which prevents CD3E-ZAP70 interaction and blocks the ERK-NFkB signaling cascade and calcium influx. The protein is T-cell surface glycoprotein CD3 epsilon chain (CD3E) of Felis catus (Cat).